The following is a 296-amino-acid chain: mRNA 3'-end-processing protein RNA15 (296 aa).

In terms of domain architecture, RRM spans Arg18 to Asn96. The segment at Ile99–Phe140 is disordered. Positions Ser100 to Ser135 are enriched in low complexity.

Component of the CFIA complex, which is composed of RNA14, RNA15, PCF11 and CLP1. Interacts directly with RNA14. Interacts with polyadenylate-binding protein PAB1.

It localises to the nucleus. Its function is as follows. RNA-binding component of the cleavage factor IA (CFIA) complex, which is involved in the endonucleolytic cleavage during polyadenylation-dependent pre-mRNA 3'-end formation and cooperates with the cleavage factor NAB4/CFIB and the cleavage and polyadenylation factor (CPF) complex. Binds to A-rich RNA sequence elements. The polypeptide is mRNA 3'-end-processing protein RNA15 (RNA15) (Saccharomyces cerevisiae (strain ATCC 204508 / S288c) (Baker's yeast)).